The chain runs to 366 residues: tRNA/tmRNA (uracil-C(5))-methyltransferase (366 aa).

S-adenosyl-L-methionine is bound by residues Gln190, Tyr218, Asn223, Glu239, and Asp299. The active-site Nucleophile is Cys324. Glu358 acts as the Proton acceptor in catalysis.

Belongs to the class I-like SAM-binding methyltransferase superfamily. RNA M5U methyltransferase family. TrmA subfamily.

The catalysed reaction is uridine(54) in tRNA + S-adenosyl-L-methionine = 5-methyluridine(54) in tRNA + S-adenosyl-L-homocysteine + H(+). It catalyses the reaction uridine(341) in tmRNA + S-adenosyl-L-methionine = 5-methyluridine(341) in tmRNA + S-adenosyl-L-homocysteine + H(+). Its function is as follows. Dual-specificity methyltransferase that catalyzes the formation of 5-methyluridine at position 54 (m5U54) in all tRNAs, and that of position 341 (m5U341) in tmRNA (transfer-mRNA). This chain is tRNA/tmRNA (uracil-C(5))-methyltransferase, found in Salmonella arizonae (strain ATCC BAA-731 / CDC346-86 / RSK2980).